The primary structure comprises 270 residues: Undecaprenyl-diphosphatase (270 aa).

8 helical membrane-spanning segments follow: residues 14–34 (GLTEVLPISSSAHLILIPTFL), 40–60 (GITFDVALHLGTFIALCLYFW), 88–108 (FYIIAGTFPAAIVGKLFETTI), 117–137 (SLIALFLIVFALLLAFADTSG), 146–166 (ITLKSAIIIGLAQCLALIPGV), 189–209 (FSFLLSLPIVAGAALFELSGL), 221–241 (PLLIGIATSAVFGYISVAFLL), and 249–269 (LYPFVWYRIAIGCLALVFINF).

This sequence belongs to the UppP family.

The protein localises to the cell inner membrane. It catalyses the reaction di-trans,octa-cis-undecaprenyl diphosphate + H2O = di-trans,octa-cis-undecaprenyl phosphate + phosphate + H(+). Functionally, catalyzes the dephosphorylation of undecaprenyl diphosphate (UPP). Confers resistance to bacitracin. The protein is Undecaprenyl-diphosphatase of Geotalea daltonii (strain DSM 22248 / JCM 15807 / FRC-32) (Geobacter daltonii).